We begin with the raw amino-acid sequence, 429 residues long: MKERTIQPVNNGLNGNITIPGDKSISHRAVMFGAIAEGTTTIKGFLPGADCLSTISCFKEMGVDIVQNGDEVTVVGKGLEGLQEPKAVLDVGNSGTTIRLMSGILANTPFLSCVQGDTSIAKRPMKRVTNPLKQMGANIDGREEGTFTPLTIRGGDLKAIEYTSPVASAQVKSAILLAGLRAEGVTAVTEPHISRDHTERMLEAFGVKVTREGKTVKLAGGQKLTATDVQVPGDVSSAAFFLVAGAIIPNSKLVLENVGMNPTRTGIIDVLEKMGATFTVEPINEGASEPAANITIETSSLKGIEIGGDIIPRLIDEIPVIALAATQAEGITVIKDAHELKVKETNRIDTVVAELTKLGARIEATDDRMIIYGKSALKGNTVNSYGDHRIGMMLAIAGCIAEGKTIIEDAEAVGVSYPTFFEELQKLAK.

3-phosphoshikimate is bound by residues Lys23, Ser24, and Arg28. Lys23 is a binding site for phosphoenolpyruvate. Gly95 and Arg123 together coordinate phosphoenolpyruvate. Positions 168, 170, 316, and 343 each coordinate 3-phosphoshikimate. Phosphoenolpyruvate is bound at residue Gln170. Catalysis depends on Asp316, which acts as the Proton acceptor. Phosphoenolpyruvate is bound by residues Arg347 and Arg389.

The protein belongs to the EPSP synthase family. As to quaternary structure, monomer.

It localises to the cytoplasm. The enzyme catalyses 3-phosphoshikimate + phosphoenolpyruvate = 5-O-(1-carboxyvinyl)-3-phosphoshikimate + phosphate. Its pathway is metabolic intermediate biosynthesis; chorismate biosynthesis; chorismate from D-erythrose 4-phosphate and phosphoenolpyruvate: step 6/7. Catalyzes the transfer of the enolpyruvyl moiety of phosphoenolpyruvate (PEP) to the 5-hydroxyl of shikimate-3-phosphate (S3P) to produce enolpyruvyl shikimate-3-phosphate and inorganic phosphate. This Bacillus anthracis (strain A0248) protein is 3-phosphoshikimate 1-carboxyvinyltransferase.